The sequence spans 130 residues: Anti-adapter protein IraD (130 aa).

It belongs to the GpW/Gp25 family. IraD subfamily. Interacts with RssB.

It is found in the cytoplasm. In terms of biological role, inhibits RpoS proteolysis by regulating RssB activity, thereby increasing the stability of the sigma stress factor RpoS during oxidative stress. Its effect on RpoS stability is due to its interaction with RssB, which probably blocks the interaction of RssB with RpoS, and the consequent delivery of the RssB-RpoS complex to the ClpXP protein degradation pathway. This is Anti-adapter protein IraD from Escherichia coli O7:K1 (strain IAI39 / ExPEC).